Here is a 339-residue protein sequence, read N- to C-terminus: uncharacterized protein (339 aa).

The ABC transporter domain occupies 13–243 (LSLNKLDVGF…PATPFICEFI (231 aa)). 45–52 (GPSGSGKS) serves as a coordination point for ATP.

It belongs to the ABC transporter superfamily.

The protein resides in the cell inner membrane. Functionally, probably part of a binding-protein-dependent transport system y4fNOP. Probably responsible for energy coupling to the transport system. This is an uncharacterized protein from Sinorhizobium fredii (strain NBRC 101917 / NGR234).